A 481-amino-acid chain; its full sequence is MEKKLVPQSISKERLQKLEAQATLTPQQEEAKARKIEREKARLKELNIPTESKESKDCSPAGMINPYALTEVILERPLDWSNPRTTDIVERVLGSSMQDLSKGDSVLRAGRDQNAEVKIVDSVLTKTQRGQDGLERILESFNDYDMPPEEKEEAAPKAKKAAQKLDIDDLREQALSSTTITKEISKIILPTKNLRDDNNTVHQYREVGFQSNGAHNLWDTVVQGIAGDCYMLAALSAIAWVWPALLNMDVDIMSNQDEWRLYRYFIGRSKQTYARPSGSGTSTNEILQEGYYKVPIFARSRYWFNGEYWPALFEQAYANWKFPNDSKYNAILQIGGGWPEEALCELSGDSWFTSSGKLMLSSFTDLSLLNFMKSMCYSWKTIKPMVIVTPCWEPLPPMMPGIAAYHAYTVLGYTVSNGAYYLIIRNPWGVTEPTGDGVLSKRDWVIHFDNMKWFNLSKDDGIFALRLDKVRENFWYIAYMY.

Residues 169–481 enclose the Calpain catalytic domain; it reads DLREQALSST…ENFWYIAYMY (313 aa). Residues Cys229, His406, and Asn426 contribute to the active site.

Belongs to the peptidase C2 family.

Its activity is regulated as follows. Inactive below 20 degrees Celsius and pH 6.0. Inhibited by divalent cations. In terms of biological role, thiol protease. Probably an important virulence factor. The polypeptide is Thiol protease (tpr) (Porphyromonas gingivalis (strain ATCC BAA-308 / W83)).